Consider the following 384-residue polypeptide: Alpha-2B adrenergic receptor (384 aa).

The chain crosses the membrane as a helical span at residues 1 to 25 (AIAAVTTFLILFTVFGNALVILAVL). Over 26–36 (TSRSLRAPQNL) the chain is Cytoplasmic. A helical membrane pass occupies residues 37–62 (FLVSLAAADILVATLIXPFSLANELL). Topologically, residues 63–72 (GYWYFWHTWC) are extracellular. A disulfide bond links C72 and C151. Residues 73–95 (EVYLALXVLXCTSSIVHLCAISL) traverse the membrane as a helical segment. Residues 96-117 (DRYWAVSRALEYNSKRTPRRIX) are Cytoplasmic-facing. A helical membrane pass occupies residues 118-140 (GIILTVWLIAAAISLPPLIYKGD). The Extracellular portion of the chain corresponds to 141–156 (QGPQPHGRPQCRLNQE). Residues 157-180 (AWYILSSSIGSFFAPCLIMILVYL) form a helical membrane-spanning segment. The Cytoplasmic portion of the chain corresponds to 181–348 (RIYLIAKRRN…LTREKRFTFV (168 aa)). The interval 193-306 (GPRAQGASKG…SXGSPQLQQP (114 aa)) is disordered. A compositionally biased stretch (low complexity) spans 288-306 (PEALPASPASXGSPQLQQP). Residues 349–372 (LAVVIGVXVLCWFPFFXSYSLGAI) traverse the membrane as a helical segment. At 373-381 (CPQHCTVXH) the chain is on the extracellular side. A helical transmembrane segment spans residues 382-384 (GLF).

Belongs to the G-protein coupled receptor 1 family. Adrenergic receptor subfamily. ADRA2B sub-subfamily. In terms of assembly, interacts with RAB26. Interacts with PPP1R9B. Interacts with GGA1, GGA2 and GGA3.

It is found in the cell membrane. Its function is as follows. Alpha-2 adrenergic receptors mediate the catecholamine-induced inhibition of adenylate cyclase through the action of G proteins. This chain is Alpha-2B adrenergic receptor (ADRA2B), found in Echinops telfairi (Lesser hedgehog tenrec).